The chain runs to 334 residues: Glycerol-1-phosphate dehydrogenase [NAD(P)+] (334 aa).

Residues glycine 77 to aspartate 81 and threonine 99 to serine 102 contribute to the NAD(+) site. Substrate is bound at residue aspartate 104. Serine 108 serves as a coordination point for NAD(+). Substrate is bound at residue aspartate 147. Residues aspartate 147 and histidine 225 each contribute to the Zn(2+) site. Histidine 229 provides a ligand contact to substrate. Histidine 246 lines the Zn(2+) pocket.

It belongs to the glycerol-1-phosphate dehydrogenase family. It depends on Zn(2+) as a cofactor.

Its subcellular location is the cytoplasm. It catalyses the reaction sn-glycerol 1-phosphate + NAD(+) = dihydroxyacetone phosphate + NADH + H(+). The enzyme catalyses sn-glycerol 1-phosphate + NADP(+) = dihydroxyacetone phosphate + NADPH + H(+). Its pathway is membrane lipid metabolism; glycerophospholipid metabolism. Functionally, catalyzes the NAD(P)H-dependent reduction of dihydroxyacetonephosphate (DHAP or glycerone phosphate) to glycerol 1-phosphate (G1P). The G1P thus generated is used as the glycerophosphate backbone of phospholipids in the cellular membranes of Archaea. The polypeptide is Glycerol-1-phosphate dehydrogenase [NAD(P)+] (Methanococcus vannielii (strain ATCC 35089 / DSM 1224 / JCM 13029 / OCM 148 / SB)).